A 222-amino-acid polypeptide reads, in one-letter code: Probable translocation protein y4yL (222 aa).

Transmembrane regions (helical) follow at residues 6–26 (PAIL…LAVV), 52–72 (PNIV…APVA), 158–178 (IGFL…TILM), and 182–202 (MSMV…FVAI).

Belongs to the FliP/MopC/SpaP family.

The protein resides in the cell membrane. Could be involved in the secretion of an unknown factor. The polypeptide is Probable translocation protein y4yL (Sinorhizobium fredii (strain NBRC 101917 / NGR234)).